A 547-amino-acid polypeptide reads, in one-letter code: CTP synthase (547 aa).

The segment at 1 to 269 (MKTKFIFVTG…DQKVAIMLRL (269 aa)) is amidoligase domain. A CTP-binding site is contributed by S14. S14 serves as a coordination point for UTP. ATP is bound by residues 15-20 (SLGKGL) and D72. The Mg(2+) site is built by D72 and E143. CTP-binding positions include 150 to 152 (DIE), 190 to 195 (KTKPTQ), and K226. UTP-binding positions include 190 to 195 (KTKPTQ) and K226. The region spanning 294–547 (TVAIVGKYVD…IGAAKKHAKV (254 aa)) is the Glutamine amidotransferase type-1 domain. An L-glutamine-binding site is contributed by G356. C383 serves as the catalytic Nucleophile; for glutamine hydrolysis. L-glutamine is bound by residues 384–387 (LGMQ), E407, and R475. Catalysis depends on residues H520 and E522.

This sequence belongs to the CTP synthase family. In terms of assembly, homotetramer.

The catalysed reaction is UTP + L-glutamine + ATP + H2O = CTP + L-glutamate + ADP + phosphate + 2 H(+). It catalyses the reaction L-glutamine + H2O = L-glutamate + NH4(+). The enzyme catalyses UTP + NH4(+) + ATP = CTP + ADP + phosphate + 2 H(+). It functions in the pathway pyrimidine metabolism; CTP biosynthesis via de novo pathway; CTP from UDP: step 2/2. Its activity is regulated as follows. Allosterically activated by GTP, when glutamine is the substrate; GTP has no effect on the reaction when ammonia is the substrate. The allosteric effector GTP functions by stabilizing the protein conformation that binds the tetrahedral intermediate(s) formed during glutamine hydrolysis. Inhibited by the product CTP, via allosteric rather than competitive inhibition. Its function is as follows. Catalyzes the ATP-dependent amination of UTP to CTP with either L-glutamine or ammonia as the source of nitrogen. Regulates intracellular CTP levels through interactions with the four ribonucleotide triphosphates. This chain is CTP synthase, found in Desulfovibrio desulfuricans (strain ATCC 27774 / DSM 6949 / MB).